Reading from the N-terminus, the 156-residue chain is Small ribosomal subunit protein uS15 (156 aa).

The disordered stretch occupies residues 1–67; it reads MARMHTRRRG…GVQGTPIPDV (67 aa). The segment covering 10 to 19 has biased composition (basic and acidic residues); sequence GSSDSDKPAA. A compositionally biased stretch (acidic residues) spans 21-32; it reads EPPEWSDVDEDA.

Belongs to the universal ribosomal protein uS15 family. In terms of assembly, part of the 30S ribosomal subunit.

This Haloarcula marismortui (strain ATCC 43049 / DSM 3752 / JCM 8966 / VKM B-1809) (Halobacterium marismortui) protein is Small ribosomal subunit protein uS15.